Consider the following 166-residue polypeptide: MFPMLTEFMNYGQQTVRAARYIGQGFMITLSHANRLPVTIQYPYEKLITSERFRGRIHFEFDKCIACEVCVRVCPIDLPVVDWKLETDIRKKRLLNYSIDFGICIFCGNCVEYCPTNCLSMTEEYELSTYDRHELNYNQIALGRLPMSIIDDYTIRTILNLPEIKT.

4Fe-4S ferredoxin-type domains follow at residues 55–84 and 95–124; these read GRIHFEFDKCIACEVCVRVCPIDLPVVDWK and LNYSIDFGICIFCGNCVEYCPTNCLSMTEE. [4Fe-4S] cluster contacts are provided by cysteine 64, cysteine 67, cysteine 70, cysteine 74, cysteine 104, cysteine 107, cysteine 110, and cysteine 114.

Belongs to the complex I 23 kDa subunit family. As to quaternary structure, NDH is composed of at least 16 different subunits, 5 of which are encoded in the nucleus. [4Fe-4S] cluster serves as cofactor.

The protein resides in the plastid. It localises to the chloroplast thylakoid membrane. The catalysed reaction is a plastoquinone + NADH + (n+1) H(+)(in) = a plastoquinol + NAD(+) + n H(+)(out). It catalyses the reaction a plastoquinone + NADPH + (n+1) H(+)(in) = a plastoquinol + NADP(+) + n H(+)(out). Its function is as follows. NDH shuttles electrons from NAD(P)H:plastoquinone, via FMN and iron-sulfur (Fe-S) centers, to quinones in the photosynthetic chain and possibly in a chloroplast respiratory chain. The immediate electron acceptor for the enzyme in this species is believed to be plastoquinone. Couples the redox reaction to proton translocation, and thus conserves the redox energy in a proton gradient. This Bahiopsis tomentosa (Tecote) protein is NAD(P)H-quinone oxidoreductase subunit I, chloroplastic.